The chain runs to 106 residues: Iron-sulfur cluster assembly protein CyaY (106 aa).

Belongs to the frataxin family. In terms of assembly, interacts with IscS. Certain pairs of proteins can bind simultaneously to IscS; IscS-IscU-CyaY complexes can be isolated in vitro, but (IscS-TusA-CyaY) complexes cannot.

In terms of biological role, involved in iron-sulfur (Fe-S) cluster assembly. May act as a regulator of Fe-S biogenesis. In Escherichia coli O157:H7, this protein is Iron-sulfur cluster assembly protein CyaY.